Consider the following 240-residue polypeptide: Sugar fermentation stimulation protein homolog (240 aa).

It belongs to the SfsA family.

This Saccharolobus islandicus (strain M.14.25 / Kamchatka #1) (Sulfolobus islandicus) protein is Sugar fermentation stimulation protein homolog.